Consider the following 2523-residue polypeptide: Non-reducing polyketide synthase Preu3 (2523 aa).

The segment at 58 to 247 (LQSLASERRA…KILAMTGSFH (190 aa)) is N-terminal acylcarrier protein transacylase domain (SAT). Residues 373–792 (DNAVAVVGMA…GSNGAMIVCQ (420 aa)) enclose the Ketosynthase family 3 (KS3) domain. Catalysis depends on for beta-ketoacyl synthase activity residues Cys539, His674, and His715. Residues 900–1207 (CFGGQVKAFV…KAFGSLADAT (308 aa)) form a malonyl-CoA:ACP transacylase (MAT) domain region. Ser986 serves as the catalytic For acyl/malonyl transferase activity. Positions 1271–1398 (HELLTFSSFE…GLVAFGGTVE (128 aa)) are N-terminal hotdog fold. The region spanning 1271–1573 (HELLTFSSFE…FTRVTVPGLR (303 aa)) is the PKS/mFAS DH domain. The product template (PT) domain stretch occupies residues 1301-1568 (LVKGHAVVAQ…ALGCRFTRVT (268 aa)). Residue His1305 is the Proton acceptor; for dehydratase activity of the active site. Residues 1421–1573 (ECDALRGSAT…FTRVTVPGLR (153 aa)) are C-terminal hotdog fold. Residue Asp1483 is the Proton donor; for dehydratase activity of the active site. The segment at 1579-1601 (ANGDARAQERPSGSRISPSPLAP) is disordered. Residues 1639 to 1713 (VDYLAQVKAL…KLAEYLAKTL (75 aa)) form the Carrier domain. At Ser1673 the chain carries O-(pantetheine 4'-phosphoryl)serine. The tract at residues 1735-1757 (DAEQSSDESPYDSTDDSASGYGD) is disordered. Positions 1738 to 1749 (QSSDESPYDSTD) are enriched in acidic residues. A methyltransferase (CMeT) domain region spans residues 1986 to 2085 (LEIGGGTGGT…MRQLLSSEGF (100 aa)). Positions 2218 to 2520 (LILHGGGHVL…RALEWLVEQC (303 aa)) are thioesterase (TE) domain.

Pantetheine 4'-phosphate is required as a cofactor.

The catalysed reaction is 3 malonyl-CoA + acetyl-CoA + S-adenosyl-L-methionine + H(+) = 3-methylorsellinate + S-adenosyl-L-homocysteine + 3 CO2 + 4 CoA. Functionally, non-reducing polyketide synthase; part of a gene cluster that mediates the biosynthesis of a yet unidentified natural product. The first step in the pathway is performed by Preu3 that condenses one acetyl-CoA starter unit with 3 malonyl-CoA units. Preu3 also catalyzes one methylation step to produce 3-methylorsellinate, an intermediate that exhibits significant antibacterial activities against methicillin-resistant Staphylococcus aureus, multidrug-resistant Enterococcus faecalis, multidrug-resistant Enterococcus faecium, and multidrug-resistant Staphylococcus epidermidis. The sequence is that of Non-reducing polyketide synthase Preu3 from Preussia isomera (Coprophilous fungus).